The primary structure comprises 184 residues: ATP synthase subunit b, chloroplastic (184 aa).

The helical transmembrane segment at 27-49 threads the bilayer; it reads LATNLINLSVVLGVLIFFGKGVL.

Belongs to the ATPase B chain family. In terms of assembly, F-type ATPases have 2 components, F(1) - the catalytic core - and F(0) - the membrane proton channel. F(1) has five subunits: alpha(3), beta(3), gamma(1), delta(1), epsilon(1). F(0) has four main subunits: a(1), b(1), b'(1) and c(10-14). The alpha and beta chains form an alternating ring which encloses part of the gamma chain. F(1) is attached to F(0) by a central stalk formed by the gamma and epsilon chains, while a peripheral stalk is formed by the delta, b and b' chains.

Its subcellular location is the plastid. The protein resides in the chloroplast thylakoid membrane. Its function is as follows. F(1)F(0) ATP synthase produces ATP from ADP in the presence of a proton or sodium gradient. F-type ATPases consist of two structural domains, F(1) containing the extramembraneous catalytic core and F(0) containing the membrane proton channel, linked together by a central stalk and a peripheral stalk. During catalysis, ATP synthesis in the catalytic domain of F(1) is coupled via a rotary mechanism of the central stalk subunits to proton translocation. In terms of biological role, component of the F(0) channel, it forms part of the peripheral stalk, linking F(1) to F(0). In Nicotiana tabacum (Common tobacco), this protein is ATP synthase subunit b, chloroplastic.